Consider the following 326-residue polypeptide: tRNA dimethylallyltransferase (326 aa).

ATP is bound at residue 18–25 (GPTASGKS). 20 to 25 (TASGKS) is a binding site for substrate. 2 interaction with substrate tRNA regions span residues 43 to 46 (DSMQ) and 167 to 171 (QRIAR).

Belongs to the IPP transferase family. In terms of assembly, monomer. Requires Mg(2+) as cofactor.

The catalysed reaction is adenosine(37) in tRNA + dimethylallyl diphosphate = N(6)-dimethylallyladenosine(37) in tRNA + diphosphate. Its function is as follows. Catalyzes the transfer of a dimethylallyl group onto the adenine at position 37 in tRNAs that read codons beginning with uridine, leading to the formation of N6-(dimethylallyl)adenosine (i(6)A). The polypeptide is tRNA dimethylallyltransferase (Rhodospirillum rubrum (strain ATCC 11170 / ATH 1.1.1 / DSM 467 / LMG 4362 / NCIMB 8255 / S1)).